A 181-amino-acid chain; its full sequence is Kappa-casein (181 aa).

An N-terminal signal peptide occupies residues 1 to 21 (MMRNFIVVVNILALTLPFLAA). T123 is modified (phosphothreonine). Residues T134, T144, and T155 are each glycosylated (O-linked (GalNAc...) threonine). Residue S162 is modified to Phosphoserine; alternate. O-linked (GalNAc...) serine; alternate glycosylation is present at S162. S178 carries the phosphoserine modification.

The protein belongs to the kappa-casein family. In terms of tissue distribution, mammary gland specific. Secreted in milk.

Its subcellular location is the secreted. Its function is as follows. Kappa-casein stabilizes micelle formation, preventing casein precipitation in milk. This Mus musculus (Mouse) protein is Kappa-casein (Csn3).